We begin with the raw amino-acid sequence, 371 residues long: uncharacterized protein (371 aa).

The region spanning 110–140 (MEKFIDFDRCNKCGECARKICKAKWTPLNYL) is the 4Fe-4S ferredoxin-type domain.

This is an uncharacterized protein from Methanocaldococcus jannaschii (strain ATCC 43067 / DSM 2661 / JAL-1 / JCM 10045 / NBRC 100440) (Methanococcus jannaschii).